Here is a 169-residue protein sequence, read N- to C-terminus: CRISPR system Cmr subunit Cmr5 (169 aa).

The protein belongs to the CRISPR system Cmr5 family. In terms of assembly, monomer in isolation. Part of the type III-B Cmr ribonucleoprotein (RNP) complex, an elongated RNP with Cmr2 and Cmr3 as the base, with Cmr4 and Cmr5 forming a helical core along the mature crRNA (39 or 45 nt in length), while the complex is capped by Cmr6 and Cmr1. The 5' end of the crRNA is bound to Cmr2 and Cmr3, while Cmr6 and a Cmr1 subunit (Cmr1-1 or Cmr1-2) cap the 3' end of the crRNA. The target RNA lies antiparallel to the crRNA, with its 5' end near Cmr1 and Cmr6 and its 3' end near Cmr2 and Cmr3; major target cleavage occurs nears the junction of Cmr1/Cmr6 and Cmr4/Cmr, with minor cleavage occurring at 6 nt intervals which coincide with the proposed spacing of Cmr4 subunits. Interacts with Cmr4. Interacts with Cmr2, Cmr4 and Cmr6.

Its subcellular location is the cytoplasm. In terms of biological role, CRISPR (clustered regularly interspaced short palindromic repeat), is an adaptive immune system that provides protection against mobile genetic elements (viruses, transposable elements and conjugative plasmids). CRISPR clusters contain sequences complementary to antecedent mobile elements and target invading nucleic acids. CRISPR clusters are transcribed and processed into CRISPR RNA (crRNA), formerly called psiRNA (prokaryotic silencing) in this organism. Part of the Cmr ribonucleoprotein complex which has divalent cation-dependent endoribonuclease activity specific for ssRNA complementary to the crRNA (target NRA), generating 5' hydroxy- and 3' phosphate or 2'-3' cyclic phosphate termini. Cmr4 is probably the subunit that cleaves target RNA. Cmr complex does not cleave ssDNA complementary to the crRNA. Cleavage of invading RNA is guided by the crRNA; substrate cleavage occurs a fixed distance (14 nt) from the 3' end of the crRNA. In vitro reconstitution shows Cmr1-2 and Cmr5 are not absolutely necessary for target cleavage. The sequence is that of CRISPR system Cmr subunit Cmr5 from Pyrococcus furiosus (strain ATCC 43587 / DSM 3638 / JCM 8422 / Vc1).